The primary structure comprises 186 residues: MDRYFFLQDATTVARLLLGNLLIRKINKKEIVARIVETEAYMGIADSACHSYGGKRTNRTNAMYSIGGYSYVYMIYGMHYMFNVVTADKNNPQAVLIRSIEPISPLLGKKSALTNGPGKLTKFLNIDLTFNKVDLIGNNELFLQRDLNLDFNIVCSKRININYAQEDDINKLWRFYIKDNKFVSRR.

This sequence belongs to the DNA glycosylase MPG family.

This Borrelia garinii subsp. bavariensis (strain ATCC BAA-2496 / DSM 23469 / PBi) (Borreliella bavariensis) protein is Putative 3-methyladenine DNA glycosylase.